The primary structure comprises 296 residues: Putative F-box protein At1g67623 (296 aa).

An F-box domain is found at 21 to 70 (SLCLDSLPEDLLVEISSCTGASSLSAVRNLRLVSKSFRRICDEKYVFYRL).

The chain is Putative F-box protein At1g67623 from Arabidopsis thaliana (Mouse-ear cress).